The primary structure comprises 274 residues: Pyrroline-5-carboxylate reductase 3 (274 aa).

This sequence belongs to the pyrroline-5-carboxylate reductase family. In terms of assembly, homodecamer; composed of 5 homodimers.

It localises to the cytoplasm. It carries out the reaction L-proline + NADP(+) = (S)-1-pyrroline-5-carboxylate + NADPH + 2 H(+). It catalyses the reaction L-proline + NAD(+) = (S)-1-pyrroline-5-carboxylate + NADH + 2 H(+). Its pathway is amino-acid biosynthesis; L-proline biosynthesis; L-proline from L-glutamate 5-semialdehyde: step 1/1. Oxidoreductase that catalyzes the last step in proline biosynthesis, which corresponds to the reduction of pyrroline-5-carboxylate (P5C) to L-proline using NAD(P)H. Proline is synthesized from either glutamate or ornithine; both are converted to P5C, and then to proline via pyrroline-5-carboxylate reductases (PYCRs). PYCR3 is exclusively linked to the biosynthesis of proline from ornithine. This chain is Pyrroline-5-carboxylate reductase 3, found in Xenopus laevis (African clawed frog).